A 2042-amino-acid polypeptide reads, in one-letter code: MWLVTFFLLYSLRKAHTEDVGTSLYFVNDSIQQVTFSSTVGVVIPCPAAGSPSAVLRWYLATGDDIYDVPHIRHVHANGTLQLYPFSPSAFNSFIHDNDYFCTAENSAGKIRSPNIRVKAVFREPYTVRVEDQRSMRGNVAVFKCLIPSSVQEYVSVVSWEKDTVSIIPENRFFITSYGGLYISDVQKEDALSTYRCITKHKYSGETRQSNGARLSVSDADPAESIPTMLDSFQSREVRAGRLVELPCIASGYPNPAIRWLKDGRPLPADGRWAKRITGLSIADLRVEDSGTYICEVTNTFGSAEVTGTLTVIDPLRVTLTPKKLKTGIGSTVILSCALSGSPEYVIRWYRNTDLVVVDDFISIRGISNETLLITAAQKSHSGAYQCFATRKSQTAQDFSIITLEDGTPRIVSSFSEKVVNPGEQFSLMCAAKGAPPPTVTWALDDEPIPRDNGHRTNQYTMSDGTTVSHMNVTSPQIKDGGVYRCTARNSVGSAEYQARINVRGPPSIRAMKNITAVAGRDTFINCRVIGYPYYSIKWYKDSLLLPDNHRQVVFENGTLKLMDVQKGMDEGEYLCSVLIQPQLSISQSVHVTVKVPPLIQPFEFPPASIGQLLYIPCVVSSGDMPIHITWRKDGHVILSGSGVTIESKEFMSSLQISSVSLKHNGNYTCIASNAAATVSRERQLIVRVPPRFVVQPNNQDGIYGKAGVLNCSVDGYPPPKVMWKHAKGSGNPQQYHPIPLTGRIQILPNSSLLIRHVLEEDIGYYLCQASNGVGTDISKSMFLTVKIPAMITSHPNTTIAIKGQSKELNCTARGERPIIIRWEKGDTVIDPDRNMRYAIATKDNGDEVISTLKLKPADRGDSVFFSCHAINSYGEDRGLIQLTVQEPPDPPELEIREVKARSMNLRWTQRFDGNSIITGFDIEYKNKSDSWDFKQSTRNISPTINQANIVDLHPASVYSIRMYSFNKIGRSEPSKELTISTEEAAPDGPPMDVTLQPMTSQSIQVTWKAPKKELQNGVIRGYQIGYRENSPGSNGQYSIVEMKATGDSEVYTLDNLKKFAQYGVVVQAFNRAGTGPSSSEINATTLEDVPSQPPENVRAISITSDVAVISWSEPPRSTLNGVLKGYRVIFWSLYMDGEWGEMQNITTTRERVELRGMEKFTNYSVQVLAYTQAGDGVRSSVLYIQTKEDIPGPPAGIKAVPSSASSVVVSWLPPAKPNGIIRKYTIFCSSPGSGQPAPSEYETSPDQLFYRIAHLNRGQQYMLWVAAVTSAGRGNISEKVTIEPAGKAPAKIISFGGTVTTPWMKDVRLPCNSVGEPVPAIKWTKDSEDSAIPVTVDGHRLIQANGTLVLRSVKAEDSGYYTCTATNTWGFDTIIINLLVQVPPDQPRLTVSKTSASSITLAWIPGDNGGSSIRGFVLQYSVDNSEEWKDVFISSSERSFKLESLKCGTWYKVKLAAKNSVGAGRISEIIEAKTHGREPSFSKDQHLFTHINSTHARLNLQGWSSGGCPITAIVLEYRPKGNWGWQSLRTNSSGEVFLTELREATWYELRMKACNSAGCGNESTQFATLDYDGSTIPPIKSAQGEGDDVKKLFTIACPIILATLGVALLFIIRKKRKEKRLKRLRDAKSLAEMLISKNNRSFDTPVKGPPQGPRLHIDIPRVQLLIEDKEGIKQLGDDKATIPVTDTEFSQAVNPQSFCTGVSLHHPALIQNTGPLIDMSDIRPGTNPVSRKSVKSAHSTRNRYSSQWTLTKCQASTPARTLTSDWRTVGSQHGITVTESDSYSASLSQDTDKGRNSMVSTESASSTYEELARAYEHAKLEEQLQHAKFEITECFISDSSSDQMTTGTTDNADSMTSMSTPSEPGICRFTASPPKPQDSERGKSVAVPIPHRASKSDYCNLPLYVKSDAFFRKPDSHEPCPVVPPREASIRSLARGYHPPARHLTLDPAAKPPGLPPPSSSSSSTTLPQRTLPMPTAASTAPAPAPAPAAPAEPPANTTTTTTTHSKVGGSRDSLLEMSTSGAGRAQKQGAGAYSKSYTLV.

The first 17 residues, 1–17 (MWLVTFFLLYSLRKAHT), serve as a signal peptide directing secretion. Residues 18-1592 (EDVGTSLYFV…AQGEGDDVKK (1575 aa)) lie on the Extracellular side of the membrane. N28 and N78 each carry an N-linked (GlcNAc...) asparagine glycan. 9 consecutive Ig-like C2-type domains span residues 37–107 (SSTV…AENS), 114–216 (PNIR…ARLS), 227–311 (PTML…GTLT), 315–403 (PLRV…SIIT), 409–502 (PRIV…ARIN), 507–587 (PSIR…LSIS), 597–686 (PPLI…RQLI), 691–785 (PRFV…MFLT), and 789–886 (PAMI…LTVQ). Cystine bridges form between C46/C102, C145/C197, C248/C295, C337/C387, and C430/C486. 9 N-linked (GlcNAc...) asparagine glycosylation sites follow: N369, N472, N514, N557, N667, N711, N750, N797, and N810. Intrachain disulfides connect C527–C576 and C618–C670. Residues C712 and C768 are joined by a disulfide bond. An intrachain disulfide couples C811 to C868. 4 consecutive Fibronectin type-III domains span residues 888–985 (PPDP…TEEA), 990–1089 (PPMD…TLED), 1094–1190 (PPEN…TKED), and 1194–1289 (PPAG…AGKA). N-linked (GlcNAc...) asparagine glycosylation is found at N927, N1083, N1145, N1163, N1276, and N1346. Residues 1279 to 1368 (EKVTIEPAGK…SGYYTCTATN (90 aa)) enclose the Ig-like C2-type 10 domain. A disulfide bond links C1312 and C1364. Fibronectin type-III domains follow at residues 1384-1478 (PPDQ…THGR) and 1479-1579 (EPSF…TIPP). 3 N-linked (GlcNAc...) asparagine glycosylation sites follow: N1493, N1532, and N1562. The chain crosses the membrane as a helical span at residues 1593-1613 (LFTIACPIILATLGVALLFII). The Cytoplasmic segment spans residues 1614 to 2042 (RKKRKEKRLK…GAYSKSYTLV (429 aa)). Disordered regions lie at residues 1716 to 1742 (PLIDMSDIRPGTNPVSRKSVKSAHSTR), 1781 to 1805 (SDSYSASLSQDTDKGRNSMVSTESA), 1841 to 1865 (SSDQMTTGTTDNADSMTSMSTPSEP), and 1940 to 2042 (PPAR…YTLV). The span at 1733–1742 (KSVKSAHSTR) shows a compositional bias: basic residues. 2 stretches are compositionally biased toward polar residues: residues 1781–1790 (SDSYSASLSQ) and 1841–1863 (SSDQMTTGTTDNADSMTSMSTPS). The segment covering 1951–1960 (AKPPGLPPPS) has biased composition (pro residues). The span at 1961–1983 (SSSSSTTLPQRTLPMPTAASTAP) shows a compositional bias: low complexity. The span at 1984–1995 (APAPAPAAPAEP) shows a compositional bias: pro residues. Low complexity-rich tracts occupy residues 1996–2005 (PANTTTTTTT) and 2023–2034 (GAGRAQKQGAGA).

As to quaternary structure, homodimer; mediates homophilic interactions to promote cell adhesion. SDK1, SDK2, DSCAM and DSCAML1 are expressed in non-overlapping subsets of interneurons and retinal ganglion cells (RGCs) that form synapses in distinct inner plexiform layer (IPL) sublaminae.

The protein resides in the cell membrane. The protein localises to the synapse. Cell adhesion molecule that plays a role in neuronal self-avoidance. Promotes repulsion between specific neuronal processes of either the same cell or the same subtype of cells. Adhesion molecule that promotes lamina-specific synaptic connections in the retina: expressed in specific subsets of interneurons and retinal ganglion cells (RGCs) and promotes synaptic connectivity via homophilic interactions. The sequence is that of Cell adhesion molecule DSCAML1 (DSCAML1) from Gallus gallus (Chicken).